Here is a 98-residue protein sequence, read N- to C-terminus: Protein translation factor SUI1 homolog (98 aa).

It belongs to the SUI1 family.

This Pyrococcus abyssi (strain GE5 / Orsay) protein is Protein translation factor SUI1 homolog.